The following is a 232-amino-acid chain: Orotidine 5'-phosphate decarboxylase (232 aa).

Substrate-binding positions include Asp-13, Lys-35, 62–71 (DLKFHDIPNT), Thr-122, Arg-182, Gln-191, Gly-211, and Arg-212. The Proton donor role is filled by Lys-64.

It belongs to the OMP decarboxylase family. Type 1 subfamily. As to quaternary structure, homodimer.

The enzyme catalyses orotidine 5'-phosphate + H(+) = UMP + CO2. It functions in the pathway pyrimidine metabolism; UMP biosynthesis via de novo pathway; UMP from orotate: step 2/2. Catalyzes the decarboxylation of orotidine 5'-monophosphate (OMP) to uridine 5'-monophosphate (UMP). This Pseudomonas fluorescens (strain SBW25) protein is Orotidine 5'-phosphate decarboxylase.